A 539-amino-acid chain; its full sequence is O-phosphoserine--tRNA(Cys) ligase (539 aa).

Residues 188 to 190 (HMT), 233 to 235 (SAS), 275 to 276 (YY), and N327 contribute to the substrate site.

This sequence belongs to the class-II aminoacyl-tRNA synthetase family. O-phosphoseryl-tRNA(Cys) synthetase subfamily. Homotetramer. Interacts with SepCysS.

It catalyses the reaction tRNA(Cys) + O-phospho-L-serine + ATP = O-phospho-L-seryl-tRNA(Cys) + AMP + diphosphate. Its function is as follows. Catalyzes the attachment of O-phosphoserine (Sep) to tRNA(Cys). The polypeptide is O-phosphoserine--tRNA(Cys) ligase (Methanosarcina acetivorans (strain ATCC 35395 / DSM 2834 / JCM 12185 / C2A)).